Reading from the N-terminus, the 516-residue chain is HMG box-containing protein 1 (516 aa).

Residues 150 to 182 (ARPPPVSSSSKSGPAFPHDHWKEETPVRHERAN) are disordered. The span at 156-165 (SSSSKSGPAF) shows a compositional bias: low complexity. A compositionally biased stretch (basic and acidic residues) spans 166–182 (PHDHWKEETPVRHERAN). The AXH domain maps to 203–345 (WCNSWPSTIW…PPGHPDAINF (143 aa)). Residues 436-504 (CKRPMNAFML…EQKRLNPDCW (69 aa)) constitute a DNA-binding region (HMG box).

In terms of assembly, binds TCF4. Binds RB1. Binds the second PAH repeat of SIN3A. Ubiquitinated by the CTLH E3 ubiquitin-protein ligase complex, leading to subsequent proteasomal degradation.

Its subcellular location is the nucleus. Functionally, transcriptional repressor that binds to the promoter region of target genes. Plays a role in the regulation of the cell cycle and of the Wnt pathway. Binds preferentially to the sequence 5'-TTCATTCATTCA-3'. Binding to the histone H1.0 promoter is enhanced by interaction with RB1. Disrupts the interaction between DNA and TCF4. The protein is HMG box-containing protein 1 (Hbp1) of Mus musculus (Mouse).